The primary structure comprises 665 residues: Long chain acyl-CoA synthetase 2 (665 aa).

Position 228 to 239 (228 to 239) interacts with ATP; that stretch reads IMYTSGTTGEPK. A fatty acid-binding region spans residues 496-520; sequence DGWFHTGDIGEWQEDGSMKIIDRKK.

It belongs to the ATP-dependent AMP-binding enzyme family. Mg(2+) serves as cofactor. Expressed along the entire length of the stem, but expression was not entirely epidermal specific, with some expression found in internal cell layers as well. Was expressed in leave epidermal cells, flowers (sepals, petals, stamens, filaments and carpel), siliques and developing seeds. In roots, expression was detected in an internal cell layer, probably the endodermal layer.

It localises to the endoplasmic reticulum. It carries out the reaction a long-chain fatty acid + ATP + CoA = a long-chain fatty acyl-CoA + AMP + diphosphate. It functions in the pathway lipid metabolism; fatty acid metabolism. In terms of biological role, activation of long-chain fatty acids for both synthesis of cellular lipids, and degradation via beta-oxidation. Acts in the cutin pathway. Preferentially uses palmitate, palmitoleate, oleate and linoleate. Required for repression of lateral root formation through its role in cutin biosynthesis and subsequent aerial tissues permeability. The sequence is that of Long chain acyl-CoA synthetase 2 (LACS2) from Arabidopsis thaliana (Mouse-ear cress).